An 88-amino-acid chain; its full sequence is Small ribosomal subunit protein bS20 (88 aa).

It belongs to the bacterial ribosomal protein bS20 family.

Binds directly to 16S ribosomal RNA. The chain is Small ribosomal subunit protein bS20 from Clostridium acetobutylicum (strain ATCC 824 / DSM 792 / JCM 1419 / IAM 19013 / LMG 5710 / NBRC 13948 / NRRL B-527 / VKM B-1787 / 2291 / W).